The chain runs to 49 residues: uncharacterized protein (49 aa).

The chain crosses the membrane as a helical span at residues 8–28 (FFLFSSGVLQATTLLLVILIF).

The protein resides in the cell membrane. This is an uncharacterized protein from Bacillus subtilis (strain 168).